The chain runs to 537 residues: Glucans biosynthesis protein D (537 aa).

A signal peptide (tat-type signal) is located at residues 1–30 (MLMYRRDFLKSVTAAWVAFGLPNPLGGAFA).

The protein belongs to the OpgD/OpgG family. In terms of processing, predicted to be exported by the Tat system. The position of the signal peptide cleavage has not been experimentally proven.

It is found in the periplasm. It functions in the pathway glycan metabolism; osmoregulated periplasmic glucan (OPG) biosynthesis. In terms of biological role, probably involved in the control of the structural glucose backbone of osmoregulated periplasmic glucans (OPGs). In Xylella fastidiosa (strain M12), this protein is Glucans biosynthesis protein D.